The following is a 212-amino-acid chain: Uridine kinase (212 aa).

Position 13–20 (13–20 (GASASGKS)) interacts with ATP.

It belongs to the uridine kinase family.

Its subcellular location is the cytoplasm. The catalysed reaction is uridine + ATP = UMP + ADP + H(+). The enzyme catalyses cytidine + ATP = CMP + ADP + H(+). It participates in pyrimidine metabolism; CTP biosynthesis via salvage pathway; CTP from cytidine: step 1/3. The protein operates within pyrimidine metabolism; UMP biosynthesis via salvage pathway; UMP from uridine: step 1/1. The polypeptide is Uridine kinase (Shewanella baltica (strain OS223)).